A 527-amino-acid polypeptide reads, in one-letter code: Bifunctional purine biosynthesis protein PurH (527 aa).

Positions Met-1–Thr-149 constitute an MGS-like domain.

This sequence belongs to the PurH family.

It carries out the reaction (6R)-10-formyltetrahydrofolate + 5-amino-1-(5-phospho-beta-D-ribosyl)imidazole-4-carboxamide = 5-formamido-1-(5-phospho-D-ribosyl)imidazole-4-carboxamide + (6S)-5,6,7,8-tetrahydrofolate. It catalyses the reaction IMP + H2O = 5-formamido-1-(5-phospho-D-ribosyl)imidazole-4-carboxamide. Its pathway is purine metabolism; IMP biosynthesis via de novo pathway; 5-formamido-1-(5-phospho-D-ribosyl)imidazole-4-carboxamide from 5-amino-1-(5-phospho-D-ribosyl)imidazole-4-carboxamide (10-formyl THF route): step 1/1. It functions in the pathway purine metabolism; IMP biosynthesis via de novo pathway; IMP from 5-formamido-1-(5-phospho-D-ribosyl)imidazole-4-carboxamide: step 1/1. The sequence is that of Bifunctional purine biosynthesis protein PurH from Stenotrophomonas maltophilia (strain K279a).